A 193-amino-acid polypeptide reads, in one-letter code: GTP cyclohydrolase-2 (193 aa).

45-49 (RIHSE) is a binding site for GTP. Zn(2+)-binding residues include C50, C61, and C63. Residues Q66, 87-89 (EGR), and T109 each bind GTP. The active-site Proton acceptor is the D121. R123 acts as the Nucleophile in catalysis. T144 and K149 together coordinate GTP.

Belongs to the GTP cyclohydrolase II family. Zn(2+) serves as cofactor.

It carries out the reaction GTP + 4 H2O = 2,5-diamino-6-hydroxy-4-(5-phosphoribosylamino)-pyrimidine + formate + 2 phosphate + 3 H(+). It participates in cofactor biosynthesis; riboflavin biosynthesis; 5-amino-6-(D-ribitylamino)uracil from GTP: step 1/4. In terms of biological role, catalyzes the conversion of GTP to 2,5-diamino-6-ribosylamino-4(3H)-pyrimidinone 5'-phosphate (DARP), formate and pyrophosphate. This Campylobacter hominis (strain ATCC BAA-381 / DSM 21671 / CCUG 45161 / LMG 19568 / NCTC 13146 / CH001A) protein is GTP cyclohydrolase-2.